A 567-amino-acid polypeptide reads, in one-letter code: Amino-acid acetyltransferase, mitochondrial (567 aa).

Residues 392-558 form the N-acetyltransferase domain; sequence KDSPQTNPLH…ARLKEYAKHI (167 aa).

The protein belongs to the acetyltransferase family.

It localises to the mitochondrion. The enzyme catalyses L-glutamate + acetyl-CoA = N-acetyl-L-glutamate + CoA + H(+). Its pathway is amino-acid biosynthesis; L-arginine biosynthesis; N(2)-acetyl-L-ornithine from L-glutamate: step 1/4. N-acetylglutamate synthase involved in arginine biosynthesis. In Vanderwaltozyma polyspora (strain ATCC 22028 / DSM 70294 / BCRC 21397 / CBS 2163 / NBRC 10782 / NRRL Y-8283 / UCD 57-17) (Kluyveromyces polysporus), this protein is Amino-acid acetyltransferase, mitochondrial (ARG2).